The primary structure comprises 294 residues: N-acetylmuramic acid 6-phosphate etherase (294 aa).

The region spanning 54–217 is the SIS domain; sequence VIQSFEEEGR…STASMIGVGK (164 aa). The active-site Proton donor is E82. E113 is an active-site residue.

It belongs to the GCKR-like family. MurNAc-6-P etherase subfamily. In terms of assembly, homodimer.

It catalyses the reaction N-acetyl-D-muramate 6-phosphate + H2O = N-acetyl-D-glucosamine 6-phosphate + (R)-lactate. The protein operates within amino-sugar metabolism; N-acetylmuramate degradation. Specifically catalyzes the cleavage of the D-lactyl ether substituent of MurNAc 6-phosphate, producing GlcNAc 6-phosphate and D-lactate. The chain is N-acetylmuramic acid 6-phosphate etherase from Bacillus cereus (strain 03BB102).